Here is a 197-residue protein sequence, read N- to C-terminus: Protein GrpE (197 aa).

Positions 1–27 (MTKQEKAENQEKPTEETVEETPKKETP) are enriched in basic and acidic residues. The tract at residues 1 to 50 (MTKQEKAENQEKPTEETVEETPKKETPFEPVMEADEVEETTEAQAPVEEA) is disordered. Positions 32–41 (MEADEVEETT) are enriched in acidic residues.

This sequence belongs to the GrpE family. In terms of assembly, homodimer.

The protein resides in the cytoplasm. In terms of biological role, participates actively in the response to hyperosmotic and heat shock by preventing the aggregation of stress-denatured proteins, in association with DnaK and GrpE. It is the nucleotide exchange factor for DnaK and may function as a thermosensor. Unfolded proteins bind initially to DnaJ; upon interaction with the DnaJ-bound protein, DnaK hydrolyzes its bound ATP, resulting in the formation of a stable complex. GrpE releases ADP from DnaK; ATP binding to DnaK triggers the release of the substrate protein, thus completing the reaction cycle. Several rounds of ATP-dependent interactions between DnaJ, DnaK and GrpE are required for fully efficient folding. The sequence is that of Protein GrpE from Latilactobacillus sakei (Lactobacillus sakei).